Reading from the N-terminus, the 255-residue chain is Indole-3-glycerol phosphate synthase (255 aa).

Belongs to the TrpC family.

The catalysed reaction is 1-(2-carboxyphenylamino)-1-deoxy-D-ribulose 5-phosphate + H(+) = (1S,2R)-1-C-(indol-3-yl)glycerol 3-phosphate + CO2 + H2O. It participates in amino-acid biosynthesis; L-tryptophan biosynthesis; L-tryptophan from chorismate: step 4/5. This is Indole-3-glycerol phosphate synthase from Streptococcus mutans serotype c (strain ATCC 700610 / UA159).